The sequence spans 862 residues: Piwi-like protein 1 (862 aa).

Basic residues predominate over residues 1–13 (MTGRARARARGRA). The disordered stretch occupies residues 1–48 (MTGRARARARGRARGQETVQHVGAAASQQPGYIPPRPQQSPTEGDLVG). Arg-14 is modified (omega-N-methylarginine; by PRMT5; alternate). Arg-14 bears the Symmetric dimethylarginine; by PRMT5; alternate mark. Arg-49 carries the post-translational modification Omega-N-methylarginine; by PRMT5. At Arg-53 the chain carries Omega-N-methylarginine; alternate. Arg-53 carries the post-translational modification Symmetric dimethylarginine; alternate. The short motif at 218–225 (RRLLKIMN) is the D-box element. Residues 279–392 (TVLDFMFNLY…LIPELCYLTG (114 aa)) enclose the PAZ domain. The required for binding 2'-O-methylated 3'-end of piRNAs stretch occupies residues 317 to 319 (TYR). At Arg-371 the chain carries Omega-N-methylarginine; by PRMT5. The MID region stretch occupies residues 480–616 (SKETRGAPLI…LQMNCKMGGE (137 aa)). The Piwi domain maps to 556–848 (IVVCLLSSNR…LAFLVGQSIH (293 aa)). Catalysis depends on residues Asp-633, Glu-671, Asp-703, and His-837.

It belongs to the argonaute family. Piwi subfamily. In terms of assembly, interacts (via Piwi domain) with DICER1, suggesting that it forms ribonucleoprotein RISC complexes; this interaction is regulated by HSP90AB1 activity. Interacts with MAEL, KIF17, PABPC1, PRMT5 and WDR77. Interacts (when methylated on arginine residues) with TDRD1, TDRKH/TDRD2, RNF17/TDRD4, TDRD6, TDRD7 and TDRD9. Interacts with CLOCK. Interacts with MOV10L1. Interacts with ANAPC10; interaction oly takes place following piRNA-binding. Interacts with RNF8; leading to sequester RNF8 in the cytoplasm. Interacts with Tex19.1 and, probably, Tex19.2. Mg(2+) is required as a cofactor. In terms of processing, ubiquitinated by the anaphase promoting complex/cyclosome (APC/C) in late spermatids, leading to its degradation. Ubiquitination only takes place following piRNA-binding in adult testis. Ubiquitination and degradation in late spermatogenesis by APC/C is probably required to release RNF8 from the cytoplasm and promote histone to protamine exchange by RNF8. Arginine methylation by PRMT5 is required for the interaction with Tudor domain-containing protein (TDRD1, TDRKH/TDRD2, RNF17/TDRD4, TDRD6, TDRD7 and TDRD9) and subsequent localization to the meiotic nuage, also named P granule. Expressed in brain. Expressed in testis, specifically in spermatocytes (at protein level). Only detected in germ lineage cells of adult testis. Expressed in male gonads 2 weeks after birth at the initiation of spermatogenesis, but not expressed in female gonads.

It localises to the cytoplasm. Functionally, endoribonuclease that plays a central role in postnatal germ cells by repressing transposable elements and preventing their mobilization, which is essential for the germline integrity. Acts via the piRNA metabolic process, which mediates the repression of transposable elements during meiosis by forming complexes composed of piRNAs and Piwi proteins and governs the methylation and subsequent repression of transposons. Directly binds methylated piRNAs, a class of 24 to 30 nucleotide RNAs that are generated by a Dicer-independent mechanism and are primarily derived from transposons and other repeated sequence elements. Strongly prefers a uridine in the first position of their guide (g1U preference, also named 1U-bias). Not involved in the piRNA amplification loop, also named ping-pong amplification cycle. Acts as an endoribonuclease that cleaves transposon messenger RNAs. Besides their function in transposable elements repression, piRNAs are probably involved in other processes during meiosis such as translation regulation. Probable component of some RISC complex, which mediates RNA cleavage and translational silencing. Also plays a role in the formation of chromatoid bodies and is required for some miRNAs stability. Required to sequester RNF8 in the cytoplasm until late spermatogenesis; RNF8 being released upon ubiquitination and degradation of PIWIL1. The protein is Piwi-like protein 1 of Mus musculus (Mouse).